The primary structure comprises 391 residues: Polyketide synthase 3 (391 aa).

C164 is an active-site residue.

This sequence belongs to the thiolase-like superfamily. Chalcone/stilbene synthases family. In terms of assembly, homodimer.

It carries out the reaction (E)-4-coumaroyl-CoA + 3 malonyl-CoA + 3 H(+) = 2',4,4',6'-tetrahydroxychalcone + 3 CO2 + 4 CoA. Its pathway is secondary metabolite biosynthesis; flavonoid biosynthesis. Its function is as follows. Polyketide synthase producing p-coumaryltriacetic acid lactone (CTAL) and slightly naringenin chalcone. Can use p-coumaryl-CoA as substrate. The protein is Polyketide synthase 3 (PKS3) of Rubus idaeus (Raspberry).